A 259-amino-acid chain; its full sequence is Global transcriptional regulator CodY (259 aa).

The tract at residues 1–155 (MNLLEKTRKI…GATVVGMEIL (155 aa)) is GAF domain. Residues 203–222 (ASKIADRVGITRSVIVNALR) constitute a DNA-binding region (H-T-H motif). Phosphoserine is present on serine 215.

It belongs to the CodY family.

It localises to the cytoplasm. In terms of biological role, DNA-binding global transcriptional regulator which is involved in the adaptive response to starvation and acts by directly or indirectly controlling the expression of numerous genes in response to nutrient availability. During rapid exponential growth, CodY is highly active and represses genes whose products allow adaptation to nutrient depletion. The chain is Global transcriptional regulator CodY from Geobacillus kaustophilus (strain HTA426).